The sequence spans 99 residues: Aspartyl/glutamyl-tRNA(Asn/Gln) amidotransferase subunit C (99 aa).

This sequence belongs to the GatC family. As to quaternary structure, heterotrimer of A, B and C subunits.

The catalysed reaction is L-glutamyl-tRNA(Gln) + L-glutamine + ATP + H2O = L-glutaminyl-tRNA(Gln) + L-glutamate + ADP + phosphate + H(+). It catalyses the reaction L-aspartyl-tRNA(Asn) + L-glutamine + ATP + H2O = L-asparaginyl-tRNA(Asn) + L-glutamate + ADP + phosphate + 2 H(+). Allows the formation of correctly charged Asn-tRNA(Asn) or Gln-tRNA(Gln) through the transamidation of misacylated Asp-tRNA(Asn) or Glu-tRNA(Gln) in organisms which lack either or both of asparaginyl-tRNA or glutaminyl-tRNA synthetases. The reaction takes place in the presence of glutamine and ATP through an activated phospho-Asp-tRNA(Asn) or phospho-Glu-tRNA(Gln). The protein is Aspartyl/glutamyl-tRNA(Asn/Gln) amidotransferase subunit C of Mycolicibacterium vanbaalenii (strain DSM 7251 / JCM 13017 / BCRC 16820 / KCTC 9966 / NRRL B-24157 / PYR-1) (Mycobacterium vanbaalenii).